Reading from the N-terminus, the 356-residue chain is Putative ankyrin repeat protein R599 (356 aa).

ANK repeat units follow at residues 111–143, 152–182, 183–213, 215–238, 239–266, and 267–298; these read NDDI…FCDN, RLEK…NVNT, HNYE…KLSD, KRKI…ELEV, NFDD…GANI, and NSIP…DINN.

The polypeptide is Putative ankyrin repeat protein R599 (Acanthamoeba polyphaga (Amoeba)).